A 64-amino-acid chain; its full sequence is Large ribosomal subunit protein bL35 (64 aa).

The segment at 19 to 41 (SGKVKRERMNGSHNLEHKNRKRT) is disordered. The segment covering 25–35 (ERMNGSHNLEH) has biased composition (basic and acidic residues).

It belongs to the bacterial ribosomal protein bL35 family.

In Chlorobaculum tepidum (strain ATCC 49652 / DSM 12025 / NBRC 103806 / TLS) (Chlorobium tepidum), this protein is Large ribosomal subunit protein bL35.